The following is a 209-amino-acid chain: Ribosomal RNA small subunit methyltransferase G (209 aa).

Residues Gly-75, Leu-80, 126 to 127, and Arg-141 each bind S-adenosyl-L-methionine; that span reads VE.

The protein belongs to the methyltransferase superfamily. RNA methyltransferase RsmG family.

The protein resides in the cytoplasm. The catalysed reaction is guanosine(527) in 16S rRNA + S-adenosyl-L-methionine = N(7)-methylguanosine(527) in 16S rRNA + S-adenosyl-L-homocysteine. Specifically methylates the N7 position of guanine in position 527 of 16S rRNA. The sequence is that of Ribosomal RNA small subunit methyltransferase G from Colwellia psychrerythraea (strain 34H / ATCC BAA-681) (Vibrio psychroerythus).